Here is a 215-residue protein sequence, read N- to C-terminus: Sodium channel regulatory subunit beta-3 (215 aa).

Positions 1-24 (MPAFNRLLPLASLVLIYWVRVCFP) are cleaved as a signal peptide. Positions 25–138 (VCVEVPSETE…EAHRPFVKTT (114 aa)) constitute an Ig-like C2-type domain. At 25-156 (VCVEVPSETE…EEAGEDFTSV (132 aa)) the chain is on the extracellular side. 2 cysteine pairs are disulfide-bonded: C26–C48 and C45–C120. N-linked (GlcNAc...) asparagine glycans are attached at residues N95, N109, N113, and N121. The chain crosses the membrane as a helical span at residues 157-178 (VSEIMMYILLVFLTLWLFIEMI). The Cytoplasmic portion of the chain corresponds to 179 to 215 (YCYRKVSKAEEAAQENASDYLAIPSENKENSVVPVEE).

The protein belongs to the sodium channel auxiliary subunit SCN3B (TC 8.A.17) family. As to quaternary structure, a voltage-gated sodium (Nav) channel consists of an ion-conducting pore-forming alpha subunit functional on its own that is regulated by one or more beta subunits. Forms homodimers and homotrimers. SCN3B is non-covalently associated with alpha subunits and induces the formation of alpha subunit oligomers, including trimers. Interacts with SCN5A/Nav1.5; regulatory subunit of SCN5A/Nav1.5. Interacts with SCN7A/Nav2.1; probable regulatory subunit of SCN7A/Nav2.1. Interacts with SCN10A; regulatory subunit of SCN10A/Nav1.8. Interacts with NFASC; probably involved in targeting the sodium channels to the nodes of Ranvier. Intramolecular disulfide bonds favor the voltage-gated sodium channel oligomeric complex assembly. In terms of processing, N-glycosylated.

It localises to the cell membrane. Its function is as follows. Regulatory subunit of multiple voltage-gated sodium (Nav) channels directly mediating the depolarization of excitable membranes. Navs, also called VGSCs (voltage-gated sodium channels) or VDSCs (voltage-dependent sodium channels), operate by switching between closed and open conformations depending on the voltage difference across the membrane. In the open conformation they allow Na(+) ions to selectively pass through the pore, along their electrochemical gradient. The influx of Na+ ions provokes membrane depolarization, initiating the propagation of electrical signals throughout cells and tissues. The accessory beta subunits participate in localization and functional modulation of the Nav channels. Modulates the activity of SCN2A/Nav1.2, causing a hyperpolarizing shift in the voltage-dependence of inactivation of the channel and increasing the fraction of channels operating in the fast gating mode. Modulates the activity of SCN5A/Nav1.5. Could also regulate the atypical sodium channel SCN7A/Nav2.1. Modulates the activity of SCN10A/Nav1.8, regulating its oligomerization and accelerating the recovery from inactivation. The chain is Sodium channel regulatory subunit beta-3 from Mus musculus (Mouse).